Consider the following 344-residue polypeptide: UDP-N-acetylenolpyruvoylglucosamine reductase (344 aa).

The region spanning Val17 to Lys187 is the FAD-binding PCMH-type domain. The active site involves Arg163. The Proton donor role is filled by Ser233. Glu329 is a catalytic residue.

This sequence belongs to the MurB family. It depends on FAD as a cofactor.

Its subcellular location is the cytoplasm. It catalyses the reaction UDP-N-acetyl-alpha-D-muramate + NADP(+) = UDP-N-acetyl-3-O-(1-carboxyvinyl)-alpha-D-glucosamine + NADPH + H(+). It functions in the pathway cell wall biogenesis; peptidoglycan biosynthesis. Its function is as follows. Cell wall formation. In Shewanella sediminis (strain HAW-EB3), this protein is UDP-N-acetylenolpyruvoylglucosamine reductase.